Here is a 320-residue protein sequence, read N- to C-terminus: Cytochrome f (320 aa).

An N-terminal signal peptide occupies residues 1–35 (MEKRNTYDWVTRWVIASFSILTISYMITWTSISNA). Heme contacts are provided by Tyr36, Cys56, Cys59, and His60. The helical transmembrane segment at 286–306 (IQGLLVFLASVVLAQIFLVLK) threads the bilayer.

Belongs to the cytochrome f family. The 4 large subunits of the cytochrome b6-f complex are cytochrome b6, subunit IV (17 kDa polypeptide, petD), cytochrome f and the Rieske protein, while the 4 small subunits are PetG, PetL, PetM and PetN. The complex functions as a dimer. Heme is required as a cofactor.

It localises to the plastid. The protein localises to the chloroplast thylakoid membrane. Its function is as follows. Component of the cytochrome b6-f complex, which mediates electron transfer between photosystem II (PSII) and photosystem I (PSI), cyclic electron flow around PSI, and state transitions. The polypeptide is Cytochrome f (Welwitschia mirabilis (Tree tumbo)).